A 366-amino-acid chain; its full sequence is Zinc-regulated GTPase metalloprotein activator 1 (366 aa).

Residues 5–12 carry the psi-PxLVp motif motif; the sequence is DECPELVP. 31–38 provides a ligand contact to GTP; it reads GYLGAGKT. Positions 89, 91, and 92 each coordinate Zn(2+). The short motif at 89-92 is the CXCC motif element; the sequence is CLCC. GTP is bound by residues 92-96 and 185-188; these read CSVKD and NKTD. A CobW C-terminal domain is found at 258-357; that stretch reads TITFEVPGSV…GEILKKEFIS (100 aa).

This sequence belongs to the SIMIBI class G3E GTPase family. ZNG1 subfamily.

The protein resides in the nucleus. It catalyses the reaction GTP + H2O = GDP + phosphate + H(+). Functionally, zinc chaperone that directly transfers zinc cofactor to target metalloproteins, thereby activating them. Catalyzes zinc insertion into the active site of methionine aminopeptidase METAP1, which function to cleave the initiator methionine from polypeptides during or after protein translation. Mechanistically, the N-terminal psi-PxLVp motif binds to the C6H2-type zinc finger of inactive form of METAP1. After formation of the docked complex, zinc is transferred from the CXCC motif in the GTPase domain of ZNG1 to the zinc binding site in the peptidase domain of METAP1 in a process requiring GTP hydrolysis. GTP/GDP exchange is required for release of active METAP1. The polypeptide is Zinc-regulated GTPase metalloprotein activator 1 (Danio rerio (Zebrafish)).